The primary structure comprises 247 residues: 5'-nucleotidase SurE (247 aa).

Residues aspartate 8, aspartate 9, serine 39, and asparagine 91 each contribute to the a divalent metal cation site.

Belongs to the SurE nucleotidase family. The cofactor is a divalent metal cation.

It localises to the cytoplasm. It catalyses the reaction a ribonucleoside 5'-phosphate + H2O = a ribonucleoside + phosphate. Nucleotidase that shows phosphatase activity on nucleoside 5'-monophosphates. The protein is 5'-nucleotidase SurE of Azoarcus sp. (strain BH72).